The primary structure comprises 343 residues: MTVSRDSLVLIHPAVTQQPELLETIEKGSILSETTIVAQYLINKLNDGTISPDDEKYDVIYYVTPEKPEAIQFPPKLIPVLHKTLKPSGRLYGLSDTLKVDALINGFEIVSNNGSEYYWVKESREKKAPVSISLKGNMKNGASAPVALPSFKKLNKTQPIGSSPSAGLAVSLKKLPTFKKLTKKVSAIKLTDSDLEDDDDDLESDDSANNSKTKFFDDFDDPETGDSIDEDDLIAETEEDTITMIQCGKSKQRRRKACKDCSCGLKEMEEQEIESRRAKQQQVIKFSEEELTEIDFTIEGKKVGGCGSCALGDAFRCSGCPYLGLPAFKPGQSINLNSISDDL.

Residues 1–188 are N-terminal SAM-like domain; sequence MTVSRDSLVL…KKLTKKVSAI (188 aa). Residues 189 to 240 are linker; that stretch reads KLTDSDLEDDDDDLESDDSANNSKTKFFDDFDDPETGDSIDEDDLIAETEED. Composition is skewed to acidic residues over residues 195–206 and 218–228; these read LEDDDDDLESDD and DFDDPETGDSI. The tract at residues 195–228 is disordered; the sequence is LEDDDDDLESDDSANNSKTKFFDDFDDPETGDSI. [2Fe-2S] cluster-binding residues include C247, C258, C261, and C263. The tract at residues 247–263 is fe-S binding site A; the sequence is CGKSKQRRRKACKDCSC. Residues C306, C309, C317, and C320 each coordinate [4Fe-4S] cluster. 2 short sequence motifs (cx2C motif) span residues 306 to 309 and 317 to 320; these read CGSC and CSGC. Positions 306 to 320 are fe-S binding site B; it reads CGSCALGDAFRCSGC.

This sequence belongs to the anamorsin family. Monomer. Interacts with TAH18. Interacts with MIA40. [2Fe-2S] cluster serves as cofactor. [4Fe-4S] cluster is required as a cofactor.

It localises to the cytoplasm. The protein localises to the mitochondrion intermembrane space. Its function is as follows. Component of the cytosolic iron-sulfur (Fe-S) protein assembly (CIA) machinery required for the maturation of extramitochondrial Fe-S proteins. Part of an electron transfer chain functioning in an early step of cytosolic Fe-S biogenesis, facilitating the de novo assembly of a [4Fe-4S] cluster on the scaffold complex CFD1-NBP35. Electrons are transferred to DRE2 from NADPH via the FAD- and FMN-containing protein TAH18. TAH18-DRE2 are also required for the assembly of the diferric tyrosyl radical cofactor of ribonucleotide reductase (RNR), probably by providing electrons for reduction during radical cofactor maturation in the catalytic small subunit RNR2. The chain is Fe-S cluster assembly protein DRE2 from Kluyveromyces lactis (strain ATCC 8585 / CBS 2359 / DSM 70799 / NBRC 1267 / NRRL Y-1140 / WM37) (Yeast).